A 304-amino-acid polypeptide reads, in one-letter code: Ubiquitin thioesterase OTU1 (304 aa).

Residues 5 to 83 (RCKTREGTQL…IVEEDKSKLR (79 aa)) are UBX-like. In terms of domain architecture, OTU spans 105-230 (IVRRVVPADN…GIHYDPLQRQ (126 aa)). The interval 110-116 (VPADNSC) is cys-loop. The active site involves D113. C116 serves as the catalytic Nucleophile. A variable-loop region spans residues 169–179 (IRREDTWGGAI). Positions 219 to 223 (YDGIH) are his-loop. I222 contributes to the substrate binding site. The active site involves H223. The tract at residues 247-252 (DEALVQ) is S2 site. The segment at 274-298 (LRCMACQKGLTGQSAARDHAKETGH) adopts a C2H2-type zinc-finger fold. The active site involves H298.

Its subcellular location is the cytoplasm. The catalysed reaction is Thiol-dependent hydrolysis of ester, thioester, amide, peptide and isopeptide bonds formed by the C-terminal Gly of ubiquitin (a 76-residue protein attached to proteins as an intracellular targeting signal).. Its function is as follows. Hydrolase that can remove conjugated ubiquitin from proteins and participates in endoplasmic reticulum-associated degradation (ERAD) for misfolded lumenal proteins. May act by triming the ubiquitin chain on the associated substrate to facilitate their threading through the VCP/p97 pore. Ubiquitin moieties on substrates may present a steric impediment to the threading process when the substrate is transferred to the VCP pore and threaded through VCP's axial channel. Mediates deubiquitination of 'Lys-27'-, 'Lys-29'- and 'Lys-33'-linked polyubiquitin chains. Also able to hydrolyze 'Lys-11'-linked ubiquitin chains. Cleaves both polyubiquitin and di-ubiquitin. The protein is Ubiquitin thioesterase OTU1 (yod1) of Xenopus laevis (African clawed frog).